A 127-amino-acid chain; its full sequence is Glycine cleavage system H protein (127 aa).

The region spanning valine 24 to lysine 106 is the Lipoyl-binding domain. At lysine 65 the chain carries N6-lipoyllysine.

It belongs to the GcvH family. The glycine cleavage system is composed of four proteins: P, T, L and H. (R)-lipoate is required as a cofactor.

The glycine cleavage system catalyzes the degradation of glycine. The H protein shuttles the methylamine group of glycine from the P protein to the T protein. This is Glycine cleavage system H protein from Laribacter hongkongensis (strain HLHK9).